The following is a 423-amino-acid chain: Gamma-glutamyl phosphate reductase (423 aa).

This sequence belongs to the gamma-glutamyl phosphate reductase family.

Its subcellular location is the cytoplasm. The enzyme catalyses L-glutamate 5-semialdehyde + phosphate + NADP(+) = L-glutamyl 5-phosphate + NADPH + H(+). It participates in amino-acid biosynthesis; L-proline biosynthesis; L-glutamate 5-semialdehyde from L-glutamate: step 2/2. In terms of biological role, catalyzes the NADPH-dependent reduction of L-glutamate 5-phosphate into L-glutamate 5-semialdehyde and phosphate. The product spontaneously undergoes cyclization to form 1-pyrroline-5-carboxylate. This is Gamma-glutamyl phosphate reductase from Paramagnetospirillum magneticum (strain ATCC 700264 / AMB-1) (Magnetospirillum magneticum).